The sequence spans 284 residues: Nucleoid occlusion protein (284 aa).

A DNA-binding region (H-T-H motif) is located at residues 143 to 162; that stretch reads EALAQRVGKSQSAIANKMRL.

It belongs to the ParB family.

The protein localises to the cytoplasm. It localises to the nucleoid. Functionally, effects nucleoid occlusion by binding relatively nonspecifically to DNA and preventing the assembly of the division machinery in the vicinity of the nucleoid, especially under conditions that disturb the cell cycle. It helps to coordinate cell division and chromosome segregation by preventing the formation of the Z ring through the nucleoid, which would cause chromosome breakage. This Listeria monocytogenes serovar 1/2a (strain ATCC BAA-679 / EGD-e) protein is Nucleoid occlusion protein.